A 313-amino-acid chain; its full sequence is Caffeic acid 3-O-methyltransferase (313 aa).

Residue 112-118 (IDQDRVF) coordinates substrate. Positions 144-162 (AFDYPGTDPRFNKIFNRAM) are substrate binding. The S-adenosyl-L-methionine site is built by Gly-190, Asp-213, Asp-233, Met-234, and Lys-247. His-251 (proton acceptor) is an active-site residue.

It belongs to the class I-like SAM-binding methyltransferase superfamily. Cation-independent O-methyltransferase family. COMT subfamily. Homodimer.

The enzyme catalyses (E)-caffeate + S-adenosyl-L-methionine = (E)-ferulate + S-adenosyl-L-homocysteine + H(+). The protein operates within aromatic compound metabolism; phenylpropanoid biosynthesis. In terms of biological role, catalyzes the conversion of caffeic acid to ferulic acid and of 5-hydroxyferulic acid to sinapic acid. The resulting products may subsequently be converted to the corresponding alcohols that are incorporated into lignins. The polypeptide is Caffeic acid 3-O-methyltransferase (COMT1) (Eucalyptus globulus (Tasmanian blue gum)).